The primary structure comprises 494 residues: Voltage-gated potassium channel regulatory subunit KCNF1 (494 aa).

Over 1–183 (MDGSGERSLP…KPESSCPARV (183 aa)) the chain is Cytoplasmic. A helical membrane pass occupies residues 184–204 (VAVLSFLLILVSSVVMCMGTI). A helical transmembrane segment spans residues 224–244 (NVETACIGWFTLEYLLRLFSS). At 245-249 (PNKLH) the chain is on the cytoplasmic side. The chain crosses the membrane as a helical span at residues 250–270 (FALSFMNIVDVLAILPFYVSL). A helical; Voltage-sensor transmembrane segment spans residues 290–310 (QALRIMRIARIFKLARHSSGL). The Cytoplasmic segment spans residues 311 to 324 (QTLTYALKRSFKEL). A helical transmembrane segment spans residues 325-345 (GLLLMYLAVGIFVFSALGYTM). Positions 358–378 (PQSFWWAIITMTTVGYGDIYP) form an intramembrane region, pore-forming. A Selectivity filter motif is present at residues 370–375 (TVGYGD). Residues 386-406 (NAAISFLCGVIAIALPIHPII) traverse the membrane as a helical segment. Topologically, residues 407-494 (NNFVRYYNKQ…HHRTRLQSCK (88 aa)) are cytoplasmic. Residues 433 to 469 (NSSSGGEGKTGGSRSDLDNLPPEPAGKEAPSCSSRLK) are disordered.

It belongs to the potassium channel family. F (TC 1.A.1.2) subfamily. Kv5.1/KCNF1 sub-subfamily. In terms of assembly, heterotetramer with KCNB1 or KCNB2. As to expression, detected in heart, brain, liver, skeletal muscle, kidney and pancreas.

The protein resides in the cell membrane. Functionally, regulatory alpha-subunit of the voltage-gated potassium (Kv) channel which, when coassembled with KCNB1 or KCNB2, can modulate their expression and their gating kinetics by acting on deactivation upon repolarization and inactivation during maintained depolarization. Accelerates inactivation but has relatively little effect on deactivation. Coexpression with KCNB1 or KCNB2 markedly slows inactivation. Each modulatory subunit has its own specific properties of regulation, and can lead to extensive inhibitions, to large changes in kinetics, and/or to large shifts in the voltage dependencies of the inactivation process. The gating kinetics depends on the nature and stoichiometry of the associated regulatory sunbunit. Fails to produce a potassium current when expressed alone. This chain is Voltage-gated potassium channel regulatory subunit KCNF1, found in Homo sapiens (Human).